The chain runs to 217 residues: N-(5'-phosphoribosyl)anthranilate isomerase (217 aa).

It belongs to the TrpF family.

The catalysed reaction is N-(5-phospho-beta-D-ribosyl)anthranilate = 1-(2-carboxyphenylamino)-1-deoxy-D-ribulose 5-phosphate. It participates in amino-acid biosynthesis; L-tryptophan biosynthesis; L-tryptophan from chorismate: step 3/5. This Acaryochloris marina (strain MBIC 11017) protein is N-(5'-phosphoribosyl)anthranilate isomerase.